The chain runs to 410 residues: Phytoene synthase 1, chloroplastic (410 aa).

A chloroplast-targeting transit peptide spans 1–62; it reads MAIILVRAAS…EAGRPSPAVY (62 aa).

It belongs to the phytoene/squalene synthase family. As to quaternary structure, monomer. Expressed in embryos, endosperm and seedling leaves. Expressed in leaves and endosperm.

The protein resides in the plastid. It is found in the chloroplast stroma. It carries out the reaction 2 (2E,6E,10E)-geranylgeranyl diphosphate = 15-cis-phytoene + 2 diphosphate. It functions in the pathway carotenoid biosynthesis; phytoene biosynthesis; all-trans-phytoene from geranylgeranyl diphosphate: step 1/1. Functionally, catalyzes the conversion of geranylgeranyl diphosphate to phytoene. Mediates the first committed step in carotenoid biosynthesis. This chain is Phytoene synthase 1, chloroplastic, found in Zea mays (Maize).